The primary structure comprises 1011 residues: Unconventional myosin ID (1011 aa).

Residues 7–690 form the Myosin motor domain; it reads AGVQDFVLLD…TLFALEHQRN (684 aa). Position 100 to 107 (100 to 107) interacts with ATP; it reads GESGAGKT. The segment at 567 to 589 is actin-binding; sequence MADLVVTLLKKEPFYVRCIKPND. 2 consecutive IQ domains span residues 694–714 and 716–736; these read PHIV…RNFK and MKAA…SYVQ. The 202-residue stretch at 806 to 1007 folds into the TH1 domain; the sequence is AGRRPYWGQA…EGNIIFEVPA (202 aa).

The protein belongs to the TRAFAC class myosin-kinesin ATPase superfamily. Myosin family. In terms of assembly, binds to F-actin. Interacts with arm. Interacts with shg. Interacts with ds (via intracellular region). In the embryo, expressed in gastric caeca, midgut cells of the proventriculus, and in the mid and hindgut. In the larval gut brush border, expression is in the terminal web domain. In the adult gut brush border, expression remains in the web domain and has also moved into the microvilli. Also expressed at low levels in follicle cells during oogenesis.

It is found in the cytoplasm. It localises to the cell cortex. The protein localises to the cytoskeleton. The protein resides in the cell membrane. Its subcellular location is the cell junction. It is found in the adherens junction. It localises to the cell projection. Functionally, unconventional myosin that functions as actin-based motor protein with ATPase activity. Binds to membranes enriched in phosphatidylinositol 4-5-bisphosphate, and can glide along actin filaments when anchored to a lipid bilayer. Generates left-right asymmetry at the level of single cells, organs and the whole body via its interaction with the actin cytoskeleton, both in the embryo and the adult. Normal left-right asymmetry of the larval midgut and hindgut requires expression in the embryonic hindgut epithelium during a critical time period, 10 to 12.75 hours after egg laying. This period corresponds to a late stage of germband retraction, and precedes left-right asymmetric morphogenesis. Expression in segment H1 of the imaginal ring is required at 0 to 24 hours after pupation for changes of cell shape and orientation in the H2 segment, which then gives rise to normal, dextral looping of the adult hindgut. Required during a critical period, 126-132 hours after egg laying, for normal, dextral rotation of the adult male genitalia. Has a double role by promoting dextral rotation in the posterior compartment of segment A8 of the male genital disk, and in repressing sinistral looping in the anterior compartment. The polypeptide is Unconventional myosin ID (Drosophila melanogaster (Fruit fly)).